A 472-amino-acid chain; its full sequence is N-succinylglutamate 5-semialdehyde dehydrogenase 1 (472 aa).

209-214 (GGVQAG) contributes to the NAD(+) binding site. Active-site residues include Glu-232 and Cys-266.

It belongs to the aldehyde dehydrogenase family. AstD subfamily.

The enzyme catalyses N-succinyl-L-glutamate 5-semialdehyde + NAD(+) + H2O = N-succinyl-L-glutamate + NADH + 2 H(+). It functions in the pathway amino-acid degradation; L-arginine degradation via AST pathway; L-glutamate and succinate from L-arginine: step 4/5. Its function is as follows. Catalyzes the NAD-dependent reduction of succinylglutamate semialdehyde into succinylglutamate. This is N-succinylglutamate 5-semialdehyde dehydrogenase 1 from Caulobacter vibrioides (strain ATCC 19089 / CIP 103742 / CB 15) (Caulobacter crescentus).